The chain runs to 98 residues: Small ribosomal subunit protein uS17 (98 aa).

The protein belongs to the universal ribosomal protein uS17 family. As to quaternary structure, part of the 30S ribosomal subunit.

In terms of biological role, one of the primary rRNA binding proteins, it binds specifically to the 5'-end of 16S ribosomal RNA. The protein is Small ribosomal subunit protein uS17 of Mesomycoplasma hyopneumoniae (strain 232) (Mycoplasma hyopneumoniae).